We begin with the raw amino-acid sequence, 362 residues long: Outer membrane porin protein OmpD (362 aa).

Positions 1-21 (MKLKLVAVAVTSLLAAGVVNA) are cleaved as a signal peptide.

This sequence belongs to the Gram-negative porin family. As to quaternary structure, homotrimer.

The protein resides in the cell outer membrane. Functionally, forms pores that allow passive diffusion of small molecules across the outer membrane. The chain is Outer membrane porin protein OmpD (ompD) from Salmonella choleraesuis (strain SC-B67).